Here is a 186-residue protein sequence, read N- to C-terminus: Trafficking protein particle complex subunit 5 (186 aa).

Belongs to the TRAPP small subunits family. BET3 subfamily. As to quaternary structure, part of the multisubunit TRAPP (transport protein particle) complex.

It is found in the golgi apparatus. Its subcellular location is the cis-Golgi network. The protein localises to the endoplasmic reticulum. In terms of biological role, may play a role in vesicular transport from endoplasmic reticulum to Golgi. This Dictyostelium discoideum (Social amoeba) protein is Trafficking protein particle complex subunit 5 (trappc5).